The following is a 694-amino-acid chain: Elongation factor G (694 aa).

One can recognise a tr-type G domain in the interval D9 to L288. Residues A18–T25, D82–H86, and N136–D139 contribute to the GTP site.

Belongs to the TRAFAC class translation factor GTPase superfamily. Classic translation factor GTPase family. EF-G/EF-2 subfamily.

It localises to the cytoplasm. Functionally, catalyzes the GTP-dependent ribosomal translocation step during translation elongation. During this step, the ribosome changes from the pre-translocational (PRE) to the post-translocational (POST) state as the newly formed A-site-bound peptidyl-tRNA and P-site-bound deacylated tRNA move to the P and E sites, respectively. Catalyzes the coordinated movement of the two tRNA molecules, the mRNA and conformational changes in the ribosome. In Chlamydia trachomatis serovar L2 (strain ATCC VR-902B / DSM 19102 / 434/Bu), this protein is Elongation factor G.